We begin with the raw amino-acid sequence, 112 residues long: U-scoloptoxin(16)-Er5a (112 aa).

An N-terminal signal peptide occupies residues 1 to 26 (MNTVSVVQFLAVGCAVFVLYGRGVFA).

It belongs to the scoloptoxin-16 family. Post-translationally, contains 2 disulfide bonds. As to expression, expressed by the venom gland.

It localises to the secreted. This is U-scoloptoxin(16)-Er5a from Ethmostigmus rubripes (Giant centipede).